Here is a 536-residue protein sequence, read N- to C-terminus: Cytochrome c oxidase subunit 1 (536 aa).

The helical transmembrane segment at 19 to 39 (IGMTYLGFGMLSAMMGTGMSV) threads the bilayer. Glu44 is a binding site for Ca(2+). Fe(II)-heme a is bound at residue His67. 6 helical membrane passes run 69 to 89 (LLMM…NFFL), 103 to 123 (LNNI…CSVL), 152 to 172 (AMFA…NFMV), 188 to 208 (PLFA…LPVL), 240 to 260 (LFWF…FGVM), and 273 to 293 (FGEM…FLVW). His246 is a Cu cation binding site. The segment at residues 246–250 (HPEVY) is a cross-link (1'-histidyl-3'-tyrosine (His-Tyr)). Tyr250 contacts O2. Residues His295 and His296 each coordinate Cu cation. 2 consecutive transmembrane segments (helical) span residues 315 to 335 (MVIA…IYGG) and 341 to 361 (VPML…LTGV). Residues His373 and Asp374 each coordinate Mg(2+). His381 is a binding site for heme a3. His383 contacts Fe(II)-heme a. Transmembrane regions (helical) follow at residues 388 to 408 (MGAL…MFGL) and 418 to 438 (HFWL…FLGL). Pro446 is a Ca(2+) binding site. A helical transmembrane segment spans residues 461–481 (MGSAMSVMSVLVGLKSVLVQL).

It belongs to the heme-copper respiratory oxidase family. In terms of assembly, component of the cytochrome c oxidase (complex IV, CIV), a multisubunit enzyme composed of a catalytic core of 3 subunits and several supernumerary subunits. The complex exists as a monomer or a dimer and forms supercomplexes (SCs) in the inner mitochondrial membrane with ubiquinol-cytochrome c oxidoreductase (cytochrome b-c1 complex, complex III, CIII). Heme is required as a cofactor. Requires Cu cation as cofactor.

It is found in the mitochondrion inner membrane. The enzyme catalyses 4 Fe(II)-[cytochrome c] + O2 + 8 H(+)(in) = 4 Fe(III)-[cytochrome c] + 2 H2O + 4 H(+)(out). It participates in energy metabolism; oxidative phosphorylation. Component of the cytochrome c oxidase, the last enzyme in the mitochondrial electron transport chain which drives oxidative phosphorylation. The respiratory chain contains 3 multisubunit complexes succinate dehydrogenase (complex II, CII), ubiquinol-cytochrome c oxidoreductase (cytochrome b-c1 complex, complex III, CIII) and cytochrome c oxidase (complex IV, CIV), that cooperate to transfer electrons derived from NADH and succinate to molecular oxygen, creating an electrochemical gradient over the inner membrane that drives transmembrane transport and the ATP synthase. Cytochrome c oxidase is the component of the respiratory chain that catalyzes the reduction of oxygen to water. Electrons originating from reduced cytochrome c in the intermembrane space (IMS) are transferred via the dinuclear copper A center (CU(A)) of subunit 2 and heme A of subunit 1 to the active site in subunit 1, a binuclear center (BNC) formed by heme A3 and copper B (CU(B)). The BNC reduces molecular oxygen to 2 water molecules using 4 electrons from cytochrome c in the IMS and 4 protons from the mitochondrial matrix. The chain is Cytochrome c oxidase subunit 1 (COX1) from Debaryomyces hansenii (strain ATCC 36239 / CBS 767 / BCRC 21394 / JCM 1990 / NBRC 0083 / IGC 2968) (Yeast).